We begin with the raw amino-acid sequence, 430 residues long: Enolase (430 aa).

A (2R)-2-phosphoglycerate-binding site is contributed by Gln-163. Glu-205 acts as the Proton donor in catalysis. Residues Asp-242, Glu-287, and Asp-314 each contribute to the Mg(2+) site. Positions 339, 368, 369, and 390 each coordinate (2R)-2-phosphoglycerate. Residue Lys-339 is the Proton acceptor of the active site.

It belongs to the enolase family. Requires Mg(2+) as cofactor.

It localises to the cytoplasm. Its subcellular location is the secreted. The protein resides in the cell surface. The enzyme catalyses (2R)-2-phosphoglycerate = phosphoenolpyruvate + H2O. Its pathway is carbohydrate degradation; glycolysis; pyruvate from D-glyceraldehyde 3-phosphate: step 4/5. Catalyzes the reversible conversion of 2-phosphoglycerate (2-PG) into phosphoenolpyruvate (PEP). It is essential for the degradation of carbohydrates via glycolysis. The sequence is that of Enolase from Bacillus velezensis (strain DSM 23117 / BGSC 10A6 / LMG 26770 / FZB42) (Bacillus amyloliquefaciens subsp. plantarum).